The primary structure comprises 1026 residues: DNA cross-link repair 1A protein (1026 aa).

Residues 1-189 are nuclear localization region; the sequence is MLEDTWEEEI…RDSKEPLGSP (189 aa). Residues 12-110 are disordered; it reads EYKSKRKPKP…HRTRRGKQVT (99 aa). The segment covering 34–65 has biased composition (basic and acidic residues); that stretch reads SVEKSTDGKHQSKGNEKRTSENPGKTKDHKVC. Residues 71-82 are compositionally biased toward low complexity; sequence SQISAGSSQSSS. Residues 98-107 are compositionally biased toward basic residues; sequence KKQHRTRRGK. Residues 118–148 form a UBZ4-type zinc finger; sequence DGYCPSCQMPFSSLLGQTPQWHVFECLDSPP. Zn(2+) contacts are provided by Cys121, Cys124, His139, and Cys143. Glycyl lysine isopeptide (Lys-Gly) (interchain with G-Cter in SUMO2) cross-links involve residues Lys359, Lys434, and Lys522. Residues 401 to 602 are nuclear focus formation; sequence SQEDLPHTDA…SSLSDLEFDA (202 aa). Disordered stretches follow at residues 474 to 542, 560 to 590, and 602 to 651; these read PLEK…SKKV, ETSLRESASEGPNVSPVVSPNQKRPRLCKRK, and AKNL…PELG. The span at 527–540 shows a compositional bias: low complexity; that stretch reads SPSSPKCSPSQPSK. The segment covering 569-581 has biased composition (polar residues); the sequence is EGPNVSPVVSPNQ. Phosphoserine is present on residues Ser574 and Ser578. Residues 619–628 are compositionally biased toward basic residues; it reads RQHRRKRHKT. Lys657 participates in a covalent cross-link: Glycyl lysine isopeptide (Lys-Gly) (interchain with G-Cter in SUMO2).

Belongs to the DNA repair metallo-beta-lactamase (DRMBL) family. In terms of assembly, binds constitutively to TP53BP1. Binds CDC27, which is itself a component of the anaphase promoting complex (APC). Binds PIAS1.

It is found in the nucleus. The enzyme catalyses a beta-lactam + H2O = a substituted beta-amino acid. In terms of biological role, may be required for DNA interstrand cross-link repair. Also required for checkpoint mediated cell cycle arrest in early prophase in response to mitotic spindle poisons. The polypeptide is DNA cross-link repair 1A protein (Dclre1a) (Mus musculus (Mouse)).